Here is a 1095-residue protein sequence, read N- to C-terminus: DNA-directed RNA polymerase subunit beta (1095 aa).

The tract at residues 1069–1095 (DLMQDVNPRRSTPSRPTYESLGKEYEE) is disordered.

The protein belongs to the RNA polymerase beta chain family. In terms of assembly, in cyanobacteria the RNAP catalytic core is composed of 2 alpha, 1 beta, 1 beta', 1 gamma and 1 omega subunit. When a sigma factor is associated with the core the holoenzyme is formed, which can initiate transcription.

The catalysed reaction is RNA(n) + a ribonucleoside 5'-triphosphate = RNA(n+1) + diphosphate. Functionally, DNA-dependent RNA polymerase catalyzes the transcription of DNA into RNA using the four ribonucleoside triphosphates as substrates. The sequence is that of DNA-directed RNA polymerase subunit beta from Prochlorococcus marinus (strain NATL1A).